A 192-amino-acid polypeptide reads, in one-letter code: Thymidylate kinase (192 aa).

Residue 7–14 participates in ATP binding; the sequence is GIDCVGKS.

Belongs to the thymidylate kinase family.

The catalysed reaction is dTMP + ATP = dTDP + ADP. Functionally, phosphorylation of dTMP to form dTDP in both de novo and salvage pathways of dTTP synthesis. This chain is Thymidylate kinase, found in Campylobacter jejuni subsp. doylei (strain ATCC BAA-1458 / RM4099 / 269.97).